We begin with the raw amino-acid sequence, 542 residues long: Adenine deaminase (542 aa).

The protein belongs to the metallo-dependent hydrolases superfamily. Adenine deaminase family. It depends on Mn(2+) as a cofactor.

The enzyme catalyses adenine + H2O + H(+) = hypoxanthine + NH4(+). The sequence is that of Adenine deaminase from Methanosphaera stadtmanae (strain ATCC 43021 / DSM 3091 / JCM 11832 / MCB-3).